A 316-amino-acid polypeptide reads, in one-letter code: Olfactory receptor 1N2 (316 aa).

Over 1–28 (MGKPGRVNQTTVSDFLLLGLSEWPEEQP) the chain is Extracellular. Asn8 carries an N-linked (GlcNAc...) asparagine glycan. A helical transmembrane segment spans residues 29–49 (LLFGIFLGMYLVTMVGNLLII). The Cytoplasmic segment spans residues 50–60 (LAISSDPHLHT). The chain crosses the membrane as a helical span at residues 61-81 (PMYFFLANLSLTDACFTSASI). The Extracellular segment spans residues 82–100 (PKMLANIHTQSQIISYSGC). Cys100 and Cys182 are oxidised to a cystine. A helical membrane pass occupies residues 101–121 (LAQLYFLLMFGGLDNCLLAVM). Topologically, residues 122–145 (AYDRYVAICQPLHYSTSMSPQLCA) are cytoplasmic. The helical transmembrane segment at 146–166 (LMLGVCWVLTNCPALMHTLLL) threads the bilayer. The Extracellular portion of the chain corresponds to 167–199 (TRVAFCAQKAIPHFYCDPSALLKLACSDTHVNE). Residues 200-220 (LMIITMGLLFLTVPLLLIVFS) form a helical membrane-spanning segment. Residues 221-243 (YVRIFWAVFVISSPGGRWKAFST) are Cytoplasmic-facing. Residues 244–264 (CGSHLTVVLLFYGSLMGVYLL) form a helical membrane-spanning segment. Topologically, residues 265–274 (PPSTYSTERE) are extracellular. Residues 275–295 (SRAAVLYMVIIPTLNPFIYSL) form a helical membrane-spanning segment. Topologically, residues 296-316 (RNRDMKEALGKLFVSGKTFFL) are cytoplasmic.

The protein belongs to the G-protein coupled receptor 1 family.

It is found in the membrane. Odorant receptor. The chain is Olfactory receptor 1N2 (OR1N2) from Homo sapiens (Human).